The primary structure comprises 599 residues: ATP-dependent zinc metalloprotease FtsH 3 (599 aa).

Over 1–7 (MKYKKKN) the chain is Cytoplasmic. The chain crosses the membrane as a helical span at residues 8-28 (ILFITTIIVIYLAFLFNWLEI). The Extracellular segment spans residues 29 to 128 (GIFKPKGESI…PFSWLLSIFS (100 aa)). The helical transmembrane segment at 129-149 (ILLNFINVLSSLVFTIYIFLA) threads the bilayer. The Cytoplasmic portion of the chain corresponds to 150-599 (IHRESGKLNS…IEQLVVNTKK (450 aa)). 214–221 (GPPGTGKT) provides a ligand contact to ATP. His436 contributes to the Zn(2+) binding site. Glu437 is a catalytic residue. His440 and Asp512 together coordinate Zn(2+).

The protein in the central section; belongs to the AAA ATPase family. In the C-terminal section; belongs to the peptidase M41 family. In terms of assembly, homohexamer. It depends on Zn(2+) as a cofactor.

It is found in the cell membrane. Functionally, acts as a processive, ATP-dependent zinc metallopeptidase for both cytoplasmic and membrane proteins. Plays a role in the quality control of integral membrane proteins. The sequence is that of ATP-dependent zinc metalloprotease FtsH 3 from Phytoplasma mali (strain AT).